Here is a 360-residue protein sequence, read N- to C-terminus: tRNA/tmRNA (uracil-C(5))-methyltransferase (360 aa).

Positions 185, 213, 218, 234, and 294 each coordinate S-adenosyl-L-methionine. The Nucleophile role is filled by Cys319. Glu353 serves as the catalytic Proton acceptor.

This sequence belongs to the class I-like SAM-binding methyltransferase superfamily. RNA M5U methyltransferase family. TrmA subfamily.

It catalyses the reaction uridine(54) in tRNA + S-adenosyl-L-methionine = 5-methyluridine(54) in tRNA + S-adenosyl-L-homocysteine + H(+). It carries out the reaction uridine(341) in tmRNA + S-adenosyl-L-methionine = 5-methyluridine(341) in tmRNA + S-adenosyl-L-homocysteine + H(+). Functionally, dual-specificity methyltransferase that catalyzes the formation of 5-methyluridine at position 54 (m5U54) in all tRNAs, and that of position 341 (m5U341) in tmRNA (transfer-mRNA). The polypeptide is tRNA/tmRNA (uracil-C(5))-methyltransferase (Nitratiruptor sp. (strain SB155-2)).